A 128-amino-acid polypeptide reads, in one-letter code: Lymphocyte antigen 6 complex locus protein G5c (128 aa).

A signal peptide spans 1 to 29; the sequence is MGAEYGCLPSTSQALYVILLIVLVRMSLV. The UPAR/Ly6 domain maps to 37-128; sequence LRCYRCLLET…NPQNRVFYIP (92 aa). 5 disulfide bridges follow: C39-C66, C42-C51, C58-C85, C94-C111, and C112-C117. The N-linked (GlcNAc...) asparagine glycan is linked to N73.

In terms of assembly, forms oligomers. N-glycosylated. Abundantly expressed in the epididymis.

It is found in the secreted. In terms of biological role, may have a role in hematopoietic cell differentiation. This chain is Lymphocyte antigen 6 complex locus protein G5c (LY6G5C), found in Canis lupus familiaris (Dog).